An 816-amino-acid polypeptide reads, in one-letter code: Subtilisin-like protease SBT2.6 (816 aa).

An N-terminal signal peptide occupies residues methionine 1 to alanine 19. Positions glutamate 20–leucine 126 are cleaved as a propeptide — activation peptide. The region spanning tyrosine 22–arginine 124 is the Inhibitor I9 domain. Positions aspartate 120 to leucine 672 constitute a Peptidase S8 domain. Residues aspartate 160 and histidine 235 each act as charge relay system in the active site. Residues aspartate 418 to aspartate 492 form the PA domain. N-linked (GlcNAc...) asparagine glycosylation is found at asparagine 504 and asparagine 578. The active-site Charge relay system is the serine 597. An N-linked (GlcNAc...) asparagine glycan is attached at asparagine 702.

Belongs to the peptidase S8 family.

It is found in the secreted. The sequence is that of Subtilisin-like protease SBT2.6 from Arabidopsis thaliana (Mouse-ear cress).